The chain runs to 870 residues: MAKVVETPLMKQYFDIKAKHPDAILLFRVGDFYEMYGEDAVIGAEILGIVQTKRANGVGQHVEMAGFPHHALDSYLPKLVRAGKRVAICDQLEDPKLTKKLVKRGITELVTPGVSINDNILNHKENNFLASIHFAKEVCGISFLDISTGEFMTAEGSIDYIDKLLNNFSPKEVLIERGNKKRFEEAFGPRFFIFELDDWIFTTSAAEDRLLKHFETKNLKGFGVQHLKLGIIASGAILYYLDQTQHTHISHITALSRIEEDRYVRLDKFTVRSLELVGTMNDEGTSLLDVIDKTISPMGSRMLRRWILFPLKDVKPIQERQEVVDYFFREPETKELLDTQLEQIGDLERIISKVAVGRVSPREVVQLKVALRAIEPIKEACMASGEPSLCRIGEQLNACALIRDRIEKEINNDPPSLVNKGGIIAKGVNEELDDLRAIAYSGKDYLLKVQQREIELTGIPSLKIAFNNVFGYYIEVRNTHKDKVPANWIRKQTLVNAERYITEELKEYEEKILGAEEKILALETRLFNELVLALTEYIPPIQMNANLIGRIDCLLSFAKAAEANKYIRPVVSDSDKIDIKGGRHPVIEKQLPLGEPYIANDVYLDDEKQQIIIITGPNMAGKSALLRQTALITLMAQIGCFVPAESAHIGIVDKIFTRVGASDNISVGESTFMVEMNEASDILNNMTSRSLVLFDELGRGTSTYDGISIAWAIVEYIHEHPNAKAKTLFATHYHELNEMERAFKRIKNYNVSVKEVGNKVIFLRKLIPGGSEHSFGIHVAKMAGMPKSIVKRSNEILKQLESENRQEGITGKPVKAIASAAEGYQLSFFQLDDPVLSQVRDEIKNLDVNNLTPLEALNKLIEIKRIITGK.

616 to 623 is a binding site for ATP; it reads GPNMAGKS.

Belongs to the DNA mismatch repair MutS family.

Functionally, this protein is involved in the repair of mismatches in DNA. It is possible that it carries out the mismatch recognition step. This protein has a weak ATPase activity. This Parabacteroides distasonis (strain ATCC 8503 / DSM 20701 / CIP 104284 / JCM 5825 / NCTC 11152) protein is DNA mismatch repair protein MutS.